The following is a 783-amino-acid chain: Polyribonucleotide nucleotidyltransferase 1, mitochondrial (783 aa).

The N-terminal 45 residues, 1–45 (MAACRLCCLCPCLRPLGCGPLGRPGRNRALSYLQMRALWSSTGSR), are a transit peptide targeting the mitochondrion. Residues Lys250, Lys264, and Lys285 each carry the N6-acetyllysine modification. Lys552 carries the N6-succinyllysine modification. One can recognise a KH domain in the interval 605-664 (PVVETVKVPLSKRAKFVGPGGYHLKKLQAETGVTISQVDEETFSIFAPTPTAMHEARDFI). The region spanning 679–750 (GAVYTATITE…ADGRMRLSRK (72 aa)) is the S1 motif domain. The residue at position 754 (Ser754) is a Phosphoserine.

It belongs to the polyribonucleotide nucleotidyltransferase family. Homotrimer; in free form. Homooligomer. Component of the mitochondrial degradosome (mtEXO) complex which is a heteropentamer containing 2 copies of SUPV3L1 and 3 copies of PNPT1. As part of the mitochondrial degradosome complex, interacts with GRSF1 in an RNA-dependent manner; the interaction enhances the activity of the complex. Interacts with TCL1A; the interaction has no effect on PNPT1 exonuclease activity.

It localises to the cytoplasm. Its subcellular location is the mitochondrion matrix. It is found in the mitochondrion intermembrane space. It carries out the reaction RNA(n+1) + phosphate = RNA(n) + a ribonucleoside 5'-diphosphate. RNA-binding protein implicated in numerous RNA metabolic processes. Catalyzes the phosphorolysis of single-stranded polyribonucleotides processively in the 3'-to-5' direction. Mitochondrial intermembrane factor with RNA-processing exoribonulease activity. Component of the mitochondrial degradosome (mtEXO) complex, that degrades 3' overhang double-stranded RNA with a 3'-to-5' directionality in an ATP-dependent manner. Involved in the degradation of non-coding mitochondrial transcripts (MT-ncRNA) and tRNA-like molecules. Required for correct processing and polyadenylation of mitochondrial mRNAs. Plays a role as a cytoplasmic RNA import factor that mediates the translocation of small RNA components, like the 5S RNA, the RNA subunit of ribonuclease P and the mitochondrial RNA-processing (MRP) RNA, into the mitochondrial matrix. Plays a role in mitochondrial morphogenesis and respiration; regulates the expression of the electron transport chain (ETC) components at the mRNA and protein levels. In the cytoplasm, shows a 3'-to-5' exoribonuclease mediating mRNA degradation activity; degrades c-myc mRNA upon treatment with IFNB1/IFN-beta, resulting in a growth arrest in melanoma cells. Regulates the stability of specific mature miRNAs in melanoma cells; specifically and selectively degrades miR-221, preferentially. Also plays a role in RNA cell surveillance by cleaning up oxidized RNAs. Binds to the RNA subunit of ribonuclease P, MRP RNA and miR-221 microRNA. The polypeptide is Polyribonucleotide nucleotidyltransferase 1, mitochondrial (Pnpt1) (Mus musculus (Mouse)).